The following is a 409-amino-acid chain: ORC1-type DNA replication protein 1 (409 aa).

ATP is bound by residues 63–67, Tyr206, and Arg218; that span reads TGKTA.

The protein belongs to the CDC6/cdc18 family.

In terms of biological role, involved in regulation of DNA replication. This Archaeoglobus fulgidus (strain ATCC 49558 / DSM 4304 / JCM 9628 / NBRC 100126 / VC-16) protein is ORC1-type DNA replication protein 1 (cdc6-1).